The sequence spans 238 residues: MEEQDARVPALEPFRVEQAPPVIYYVPDFISKEEEEYLLRQVFNAPKPKWTQLSGRKLQNWGGLPHPRGMVPERLPPWLQRYVDKVSNLSLFGGLPANHVLVNQYLPGEGIMPHEDGPLYYPTVSTISLGSHTVLDFYEPRRPEDDDPTEQPRPPPRPTTSLLLEPRSLLVLRGPAYTRLLHGIAAARVDALDAASSPPNAAACPSARPGACLVRGTRVSLTIRRVPRVLRAGLLLGK.

In terms of domain architecture, Fe2OG dioxygenase spans 96–227; that stretch reads PANHVLVNQY…RVSLTIRRVP (132 aa). Residues Asn-103 and Tyr-105 each coordinate 2-oxoglutarate. Fe cation is bound by residues His-114 and Asp-116. Residues 138 to 161 form a disordered region; that stretch reads YEPRRPEDDDPTEQPRPPPRPTTS. His-182 contributes to the Fe cation binding site. 2-oxoglutarate-binding residues include Arg-218 and Ser-220.

It belongs to the alkB family. Interacts with VCPKMT. The cofactor is Fe(2+). In terms of tissue distribution, widely expressed, with highest expression in testis and pancreas.

It localises to the cytoplasm. It is found in the nucleus. In terms of biological role, probable Fe(2+)/2-oxoglutarate-dependent dioxygenase involved in oxidative demethylation of nucleic acids. Binds nucleic acids with a preference for ssDNA or ssRNA to other types of DNAs. May play a role in nucleic acid damage repair. The polypeptide is Probable RNA/DNA demethylase ALKBH6 (Homo sapiens (Human)).